The primary structure comprises 565 residues: uncharacterized protein (565 aa).

A signal peptide spans 1-21 (MKIPSQQVLLALPLLASPAQS). Asn-46 and Asn-88 each carry an N-linked (GlcNAc...) asparagine glycan. The region spanning 118-302 (QGIVPYYSVS…TSVTYKTHPK (185 aa)) is the FAD-binding PCMH-type domain. Residue His-155 is modified to Pros-8alpha-FAD histidine. 5 N-linked (GlcNAc...) asparagine glycosylation sites follow: Asn-191, Asn-314, Asn-364, Asn-371, and Asn-484.

The protein belongs to the oxygen-dependent FAD-linked oxidoreductase family. Requires FAD as cofactor.

It localises to the secreted. This is an uncharacterized protein from Arthroderma benhamiae (strain ATCC MYA-4681 / CBS 112371) (Trichophyton mentagrophytes).